The primary structure comprises 70 residues: Large ribosomal subunit protein bL32c (70 aa).

Disordered stretches follow at residues 1–20 (MAVP…KNVR) and 51–70 (NDDS…LDDP). Residues 52 to 61 (DDSSGSSESK) show a composition bias toward polar residues.

The protein belongs to the bacterial ribosomal protein bL32 family.

The protein resides in the plastid. Its subcellular location is the chloroplast. The polypeptide is Large ribosomal subunit protein bL32c (rpl32) (Pinus thunbergii (Japanese black pine)).